The primary structure comprises 198 residues: Glycerol-3-phosphate acyltransferase 3 (198 aa).

Helical transmembrane passes span 4–24 (TYLL…LVVG), 71–91 (LPMV…AVLG), 113–133 (LLCY…TLLF), and 147–167 (VVAV…AMCL).

The protein belongs to the PlsY family. In terms of assembly, probably interacts with PlsX.

It is found in the cell membrane. It carries out the reaction an acyl phosphate + sn-glycerol 3-phosphate = a 1-acyl-sn-glycero-3-phosphate + phosphate. It participates in lipid metabolism; phospholipid metabolism. In terms of biological role, catalyzes the transfer of an acyl group from acyl-phosphate (acyl-PO(4)) to glycerol-3-phosphate (G3P) to form lysophosphatidic acid (LPA). This enzyme utilizes acyl-phosphate as fatty acyl donor, but not acyl-CoA or acyl-ACP. The protein is Glycerol-3-phosphate acyltransferase 3 of Bacillus anthracis.